We begin with the raw amino-acid sequence, 1407 residues long: DNA-directed RNA polymerase subunit beta' (1407 aa).

The Zn(2+) site is built by Cys-70, Cys-72, Cys-85, and Cys-88. Mg(2+) is bound by residues Asp-460, Asp-462, and Asp-464. The Zn(2+) site is built by Cys-814, Cys-888, Cys-895, and Cys-898. An N6-acetyllysine modification is found at Lys-972.

The protein belongs to the RNA polymerase beta' chain family. As to quaternary structure, the RNAP catalytic core consists of 2 alpha, 1 beta, 1 beta' and 1 omega subunit. When a sigma factor is associated with the core the holoenzyme is formed, which can initiate transcription. Mg(2+) is required as a cofactor. Requires Zn(2+) as cofactor.

It catalyses the reaction RNA(n) + a ribonucleoside 5'-triphosphate = RNA(n+1) + diphosphate. Functionally, DNA-dependent RNA polymerase catalyzes the transcription of DNA into RNA using the four ribonucleoside triphosphates as substrates. The protein is DNA-directed RNA polymerase subunit beta' of Escherichia coli (strain SMS-3-5 / SECEC).